The primary structure comprises 122 residues: Small ribosomal subunit protein bS16 (122 aa).

The interval 87 to 122 (VGKAKQAEARKAGAKNVAKQAAEAKAEETPADNTEA) is disordered.

Belongs to the bacterial ribosomal protein bS16 family.

The polypeptide is Small ribosomal subunit protein bS16 (Prochlorococcus marinus (strain MIT 9303)).